A 442-amino-acid polypeptide reads, in one-letter code: Choline monooxygenase, chloroplastic (442 aa).

The N-terminal 58 residues, 1–58 (MASSASMLINYPTTFCGVRNSSNPNNDQFSDQINIPSSLNNNINISKITSKTNKIIPK), are a transit peptide targeting the chloroplast. The Rieske domain occupies 123-229 (WQVAGYSDQI…VAIWGPFVLI (107 aa)). Residues cysteine 165, histidine 167, cysteine 184, and histidine 187 each contribute to the [2Fe-2S] cluster site. Residues histidine 290 and histidine 295 each contribute to the Fe cation site.

This sequence belongs to the choline monooxygenase family. [2Fe-2S] cluster serves as cofactor. Requires Fe cation as cofactor. It depends on Mg(2+) as a cofactor.

Its subcellular location is the plastid. It is found in the chloroplast stroma. It carries out the reaction choline + 2 reduced [2Fe-2S]-[ferredoxin] + O2 + 2 H(+) = betaine aldehyde hydrate + 2 oxidized [2Fe-2S]-[ferredoxin] + H2O. It participates in amine and polyamine biosynthesis; betaine biosynthesis via choline pathway; betaine aldehyde from choline (monooxygenase route): step 1/1. Functionally, catalyzes the first step of the osmoprotectant glycine betaine synthesis. The sequence is that of Choline monooxygenase, chloroplastic (CMO) from Amaranthus tricolor (Joseph's coat).